The sequence spans 337 residues: Adenylosuccinate synthetase (337 aa).

GTP-binding positions include 12-18 and 42-44; these read GDEGKGK and GHT. The Proton acceptor role is filled by Asp13. Mg(2+) is bound by residues Asp13 and Gly42. Residues 13 to 16, 40 to 43, Thr127, Arg141, Gln179, Thr194, and Arg256 contribute to the IMP site; these read DEGK and NAGH. Catalysis depends on His43, which acts as the Proton donor. Residue 252-258 participates in substrate binding; sequence TVTGRRR. GTP contacts are provided by residues Arg258, 284 to 286, and 324 to 326; these read CLD and STG.

It belongs to the adenylosuccinate synthetase family. As to quaternary structure, homodimer. Mg(2+) is required as a cofactor.

It is found in the cytoplasm. It catalyses the reaction IMP + L-aspartate + GTP = N(6)-(1,2-dicarboxyethyl)-AMP + GDP + phosphate + 2 H(+). The protein operates within purine metabolism; AMP biosynthesis via de novo pathway; AMP from IMP: step 1/2. Its function is as follows. Plays an important role in the de novo pathway of purine nucleotide biosynthesis. Catalyzes the first committed step in the biosynthesis of AMP from IMP. The sequence is that of Adenylosuccinate synthetase from Methanococcus maripaludis (strain C5 / ATCC BAA-1333).